We begin with the raw amino-acid sequence, 335 residues long: MTIVVGFEGSANKIGVGIIQDGKVLSNPRRTYITPPGQGFMPSDTARHHRSCILDVLQEALEESNIKPEDVDCVAYTKGPGMGAPLLSVAIVARTVAQLWKKPLLGVNHCIGHIEMGRLITGAENPTVLYVSGGNTQVIAYSERCYRIFGETIDIAVGNCLDRFARVLKISNDPSPGYNIEQMAKKGKKFVELPYTVKGMDVSFSGILSYIEDMSHKMLSSGECTPEDLCFSLQETLFSMLVEITERAMAHCGSQEVLIVGGVGCNVRLQEMMGVMCEERGAKIFATDERFCIDNGAMIAQAGWEMFRAGQVTNLQDSWITQRYRTDEVEVTWRD.

Positions 109, 113, and 130 each coordinate a divalent metal cation. Substrate is bound by residues 130-134, aspartate 162, glycine 177, glutamate 181, and asparagine 266; that span reads YVSGG. Aspartate 294 contacts a divalent metal cation.

The protein belongs to the KAE1 / TsaD family. Component of the EKC/KEOPS complex composed of at least tp53rk, tprkb, osgep and lage3; the whole complex dimerizes. It depends on a divalent metal cation as a cofactor.

It localises to the cytoplasm. Its subcellular location is the nucleus. The enzyme catalyses L-threonylcarbamoyladenylate + adenosine(37) in tRNA = N(6)-L-threonylcarbamoyladenosine(37) in tRNA + AMP + H(+). In terms of biological role, component of the EKC/KEOPS complex that is required for the formation of a threonylcarbamoyl group on adenosine at position 37 (t(6)A37) in tRNAs that read codons beginning with adenine. The complex is probably involved in the transfer of the threonylcarbamoyl moiety of threonylcarbamoyl-AMP (TC-AMP) to the N6 group of A37. Osgep likely plays a direct catalytic role in this reaction, but requires other protein(s) of the complex to fulfill this activity. The protein is tRNA N6-adenosine threonylcarbamoyltransferase of Xenopus laevis (African clawed frog).